Here is a 639-residue protein sequence, read N- to C-terminus: MTHHDCAHCSSDACATEMLNLAEANSIETAWHRYEKQQPQCGFGSAGLCCRICLKGPCRIDPFGEGPKYGVCGADRDTIVARHLVRMIAAGTAAHSEHGRHIALAMQHISQGELHDYSIRDEAKLYAIAKTLGVATEGRGLLAIVGDLAAITLGDFQNQDYDKPCAWLAASLTPRRVKRLGDLGLLPHNIDASVAQTMSRTHVGCDADPTNLILGGLRVAMADLDGSMLATELSDALFGTPQPVVSAANLGVMKRGAVNIAVNGHNPMLSDIICDVAADLRDEAIAAGAAEGINIIGICCTGHEVMMRHGVPLATNYLSQELPILTGALEAMVVDVQCIMPSLPRIAECFHTQIITTDKHNKISGATHVPFDEHKAVETAKTIIRMAIAAFGRRDPNRVAIPAFKQKSIVGFSAEAVVAALAKVNADDPLKPLVDNVVNGNIQGIVLFVGCNTTKVQQDSAYVDLAKSLAKRNVLVLATGCAAGAFAKAGLMTSEATTQYAGEGLKGVLSAIGTAAGLGGPLPLVMHMGSCVDNSRAVALATALANKLGVDLSDLPLVASAPECMSEKALAIGSWAVTIGLPTHVGSVPPVIGSQIVTKLVTETAKDLVGGYFIVDTDPKSAGDKLYAAIQERRAGLGL.

Cys-41, Cys-49, Cys-50, Cys-53, Cys-58, and Cys-72 together coordinate [4Fe-4S] cluster. Residues His-265, Cys-300, Cys-338, Cys-451, Cys-481, and Cys-531 each coordinate [Ni-4Fe-4S] cluster.

Belongs to the Ni-containing carbon monoxide dehydrogenase family. As to quaternary structure, homodimer. It depends on [4Fe-4S] cluster as a cofactor. The cofactor is [Ni-4Fe-4S] cluster.

The protein resides in the cytoplasm. It localises to the cell inner membrane. It carries out the reaction CO + 2 oxidized [2Fe-2S]-[ferredoxin] + H2O = 2 reduced [2Fe-2S]-[ferredoxin] + CO2 + 2 H(+). Allows growth in a CO-dependent manner in the dark. CODH oxidizes carbon monoxide coupled, via CooF, to the reduction of a hydrogen cation by a hydrogenase (possibly CooH). The sequence is that of Carbon monoxide dehydrogenase (cooS) from Rhodospirillum rubrum.